The primary structure comprises 377 residues: MSVLFTILLMAVIGGFIGAMTNYIAIRMLFRPYKALYLFNKRVPFTPGLIPKRRDELAEHIGKVVVSHLLTEDAIRARLLEENLQKEITETVAKMFHEKMQLETTPNELLHQLGYENAEGRSISWLETVLEKEINHFLTIKKTSQMNELIPVMLEKELETKLPHVTERITSKLTLFIASEEGKLQIKMMLQKFFEEHGKMGSMARMFINVESFSEKIQQEGAKLINQEDTKNLINQLLTTEWKNFEAKELQELIPTEKQAHLAEQLTSEIIQAFPHDKIFNQPVQVILRDYEVMIKSKIIPFAVERMLDFVATHSADIVERMDLAKLVETQIATFSLQEIEKLVVEISGRELKMITYLGGILGGFIGVIQGILAIWI.

2 helical membrane-spanning segments follow: residues 1 to 21 and 357 to 377; these read MSVL…GAMT and YLGG…AIWI.

It belongs to the UPF0754 family.

Its subcellular location is the cell membrane. This chain is UPF0754 membrane protein lwe2241, found in Listeria welshimeri serovar 6b (strain ATCC 35897 / DSM 20650 / CCUG 15529 / CIP 8149 / NCTC 11857 / SLCC 5334 / V8).